A 1004-amino-acid polypeptide reads, in one-letter code: 26S proteasome non-ATPase regulatory subunit 1 homolog A (1004 aa).

Residue alanine 2 is modified to N-acetylalanine. Lysine 166 is covalently cross-linked (Glycyl lysine isopeptide (Lys-Gly) (interchain with G-Cter in ubiquitin)). PC repeat units follow at residues 412–447 (SATA…GGSP), 452–485 (GALY…EVIQ), 487–521 (GACL…VAGE), 522–555 (AAGI…EKII), 557–590 (GLAL…IIRY), 591–626 (GGMY…DVRR), 627–659 (TAVL…PHVR), 661–695 (GAAL…FVRQ), 696–736 (GALI…DTMS), and 739–771 (GAIL…TAVI). Disordered stretches follow at residues 858-905 (EQKA…KKAP) and 959-1004 (VLSL…EYAS). Position 896 is a phosphoserine (serine 896). The span at 965–987 (APTSTASPATGTAAAAQGTPASA) shows a compositional bias: low complexity.

The protein belongs to the proteasome subunit S1 family. Component of the 19S regulatory particle (RP/PA700) base subcomplex of the 26S proteasome. The 26S proteasome is composed of a core protease (CP), known as the 20S proteasome, capped at one or both ends by the 19S regulatory particle (RP/PA700). The RP/PA700 complex is composed of at least 17 different subunits in two subcomplexes, the base and the lid, which form the portions proximal and distal to the 20S proteolytic core, respectively. As to expression, ubiquitous with highest expression in flowers.

Functionally, acts as a regulatory subunit of the 26 proteasome which is involved in the ATP-dependent degradation of ubiquitinated proteins. The protein is 26S proteasome non-ATPase regulatory subunit 1 homolog A (RPN2A) of Arabidopsis thaliana (Mouse-ear cress).